Reading from the N-terminus, the 430-residue chain is Tol-Pal system protein TolB (430 aa).

Positions 1–21 (MKQALRVAFGFLILWASVLHA) are cleaved as a signal peptide.

This sequence belongs to the TolB family. As to quaternary structure, the Tol-Pal system is composed of five core proteins: the inner membrane proteins TolA, TolQ and TolR, the periplasmic protein TolB and the outer membrane protein Pal. They form a network linking the inner and outer membranes and the peptidoglycan layer.

It localises to the periplasm. Its function is as follows. Part of the Tol-Pal system, which plays a role in outer membrane invagination during cell division and is important for maintaining outer membrane integrity. TolB occupies a key intermediary position in the Tol-Pal system because it communicates directly with both membrane-embedded components, Pal in the outer membrane and TolA in the inner membrane. The sequence is that of Tol-Pal system protein TolB from Escherichia coli O8 (strain IAI1).